The following is a 281-amino-acid chain: Probable endonuclease 4 (281 aa).

9 residues coordinate Zn(2+): H69, H109, E145, D179, H182, H216, D229, H231, and E261.

It belongs to the AP endonuclease 2 family. Zn(2+) is required as a cofactor.

It carries out the reaction Endonucleolytic cleavage to 5'-phosphooligonucleotide end-products.. In terms of biological role, endonuclease IV plays a role in DNA repair. It cleaves phosphodiester bonds at apurinic or apyrimidinic (AP) sites, generating a 3'-hydroxyl group and a 5'-terminal sugar phosphate. The polypeptide is Probable endonuclease 4 (Glaesserella parasuis serovar 5 (strain SH0165) (Haemophilus parasuis)).